Consider the following 760-residue polypeptide: uncharacterized protein (760 aa).

An N-terminal signal peptide occupies residues Met1–Ala23. A lipid anchor (N-palmitoyl cysteine) is attached at Cys24. Cys24 carries S-diacylglycerol cysteine lipidation. Disordered stretches follow at residues Ala220 to Asn262 and Tyr443 to Ser482. Composition is skewed to polar residues over residues Gly222–Ala257 and Pro448–Gln472.

Belongs to the MG185/MG260 family.

It is found in the cell membrane. This is an uncharacterized protein from Mycoplasma pneumoniae (strain ATCC 29342 / M129 / Subtype 1) (Mycoplasmoides pneumoniae).